Reading from the N-terminus, the 257-residue chain is MQKVTIQEAEHLLQEIMSEEDDRFQILIKDERKGVQKLILKWYKQKELAQKEKEKFLEMSKYENALREKGLTYIAGIDEVGRGPLAGPVVTAAVILPEDFYIPGLNDSKKLSEAKRERFYGEIKAKAIAIGVGIVSPQVIDEINIYQATKQAMLDAIANLSCTPEYLLIDAMKLPTPIPQTSIIKGDAKSISISAASIIAKVTRDRMMKELGEKYPAYGFEQHMGYGTKQHLEAIEAHGVLEEHRKSFAPIKDMIQK.

An RNase H type-2 domain is found at 72–257 (TYIAGIDEVG…FAPIKDMIQK (186 aa)). A divalent metal cation-binding residues include D78, E79, and D170.

It belongs to the RNase HII family. It depends on Mn(2+) as a cofactor. Mg(2+) serves as cofactor.

The protein localises to the cytoplasm. The catalysed reaction is Endonucleolytic cleavage to 5'-phosphomonoester.. In terms of biological role, endonuclease that specifically degrades the RNA of RNA-DNA hybrids. This Bacillus thuringiensis (strain Al Hakam) protein is Ribonuclease HII.